A 223-amino-acid chain; its full sequence is Prolactin-3D4 (223 aa).

A signal peptide spans 1 to 28 (MQLTLTLSGSSMQLLLLVSNLLLWENMA). 2 disulfide bridges follow: C80–C198 and C215–C223. N108 and N157 each carry an N-linked (GlcNAc...) asparagine glycan.

It belongs to the somatotropin/prolactin family. In terms of processing, N-glycosylated.

The protein resides in the secreted. The sequence is that of Prolactin-3D4 (Prl3d4) from Rattus norvegicus (Rat).